A 172-amino-acid polypeptide reads, in one-letter code: uncharacterized protein (172 aa).

The Ferritin-like diiron domain maps to Met1 to Asn148.

This is an uncharacterized protein from Ureaplasma urealyticum (Ureaplasma urealyticum biotype 2).